A 125-amino-acid polypeptide reads, in one-letter code: Small ribosomal subunit protein eS8 (125 aa).

Residues 1 to 30 form a disordered region; it reads MTIFQGRATRKPSGGKLRPNHSKRRYELGR.

Belongs to the eukaryotic ribosomal protein eS8 family. In terms of assembly, part of the 30S ribosomal subunit.

The sequence is that of Small ribosomal subunit protein eS8 from Picrophilus torridus (strain ATCC 700027 / DSM 9790 / JCM 10055 / NBRC 100828 / KAW 2/3).